Consider the following 999-residue polypeptide: P3N-PIPO polyprotein (999 aa).

The Peptidase S30 domain occupies 176–317 (LKKAVGSGKV…LDNVYTIEHY (142 aa)). Residues H230, E239, and S271 each act as for P1 proteinase activity in the active site. The Involved in interaction with stylet and aphid transmission motif lies at 370–373 (KLSC). The short motif at 626-628 (PTK) is the Involved in virions binding and aphid transmission element. In terms of domain architecture, Peptidase C6 spans 652-774 (MYIAKEGYCY…EGEMKHYRVG (123 aa)). Catalysis depends on for helper component proteinase activity residues C660 and H733.

The protein belongs to the potyviridae P3N-PIPO polyprotein family. In terms of assembly, interacts (via PIPO domain) with host PCaP1 protein; this interaction may help to anchor the movement complex to the plasma membrane from which the complex could move to the plasmodesmata. Post-translationally, potyviral RNA is expressed as two polyproteins which undergo post-translational proteolytic processing. Genome polyprotein is processed by NIa-pro, P1 and HC-pro proteinases resulting in the production of at least ten individual proteins. P3N-PIPO is cleaved by P1 and HC-pro proteinases resulting in the production of three individual proteins. The P1 proteinase and the HC-pro cleave only their respective C-termini autocatalytically.

The protein resides in the host cell junction. The protein localises to the host plasmodesma. It carries out the reaction Hydrolyzes a Gly-|-Gly bond at its own C-terminus, commonly in the sequence -Tyr-Xaa-Val-Gly-|-Gly, in the processing of the potyviral polyprotein.. Its function is as follows. Required for aphid transmission and also has proteolytic activity. Only cleaves a Gly-Gly dipeptide at its own C-terminus. Interacts with virions and aphid stylets. Acts as a suppressor of RNA-mediated gene silencing, also known as post-transcriptional gene silencing (PTGS), a mechanism of plant viral defense that limits the accumulation of viral RNAs. May have RNA-binding activity. Allows efficient cell to cell propagation, by bypassing the host cell wall barrier. Transports viral genome to neighboring plant cells directly through plasmosdesmata, without any budding. The sequence is that of P3N-PIPO polyprotein from Phaseolus vulgaris (Kidney bean).